The primary structure comprises 66 residues: Large ribosomal subunit protein uL29 (66 aa).

The protein belongs to the universal ribosomal protein uL29 family.

This chain is Large ribosomal subunit protein uL29, found in Bacillus licheniformis (strain ATCC 14580 / DSM 13 / JCM 2505 / CCUG 7422 / NBRC 12200 / NCIMB 9375 / NCTC 10341 / NRRL NRS-1264 / Gibson 46).